The sequence spans 178 residues: Caveolin-1 (178 aa).

Ser-2 carries the post-translational modification N-acetylserine. Ser-2 carries the phosphoserine modification. The tract at residues Ser-2–Val-94 is required for homooligomerization. Topologically, residues Ser-2–Ser-104 are cytoplasmic. The residue at position 5 (Lys-5) is an N6-acetyllysine; alternate. Lys-5 is covalently cross-linked (Glycyl lysine isopeptide (Lys-Gly) (interchain with G-Cter in ubiquitin); alternate). Position 6 is a phosphotyrosine (Tyr-6). Ser-9 bears the Phosphoserine mark. The residue at position 14 (Tyr-14) is a Phosphotyrosine; by ABL1. Tyr-25 is modified (phosphotyrosine). Glycyl lysine isopeptide (Lys-Gly) (interchain with G-Cter in ubiquitin) cross-links involve residues Lys-26, Lys-30, Lys-39, Lys-47, and Lys-57. The interaction with CAVIN3 stretch occupies residues Asp-82–Val-94. The helical intramembrane region spans Ala-105–Leu-125. At His-126–Ile-178 the chain is on the cytoplasmic side. An interacts with SPRY1, SPRY2, SPRY3 and SPRY4 region spans residues Val-131–Gln-142. 3 S-palmitoyl cysteine lipidation sites follow: Cys-133, Cys-143, and Cys-156. Positions Ser-149 to Phe-160 are interacts with SPRY1, SPRY2, and SPRY4. The tract at residues Phe-167 to Ile-178 is interacts with SPRY1, SPRY2, SPRY3 and SPRY4.

It belongs to the caveolin family. In terms of assembly, homooligomer. Interacts with GLIPR2. Interacts with NOSTRIN. Interacts with SNAP25 and STX1A. Interacts (via the N-terminus) with DPP4; the interaction is direct. Interacts with CTNNB1, CDH1 and JUP. Interacts with PACSIN2; this interaction induces membrane tubulation. Interacts with SLC7A9. Interacts with BMX and BTK. Interacts with TGFBR1. Interacts with CAVIN3 (via leucine-zipper domain) in a cholesterol-sensitive manner. Interacts with CAVIN1. Interacts with EHD2 in a cholesterol-dependent manner. Forms a ternary complex with UBXN6 and VCP; mediates CAV1 targeting to lysosomes for degradation. Interacts with ABCG1; this interaction regulates ABCG1-mediated cholesterol efflux. Interacts with NEU3; this interaction enhances NEU3 sialidase activity within caveola. Interacts (via C-terminus) with SPRY1, SPRY2 (via C-terminus), SPRY3, and SPRY4. Interacts with IGFBP5; this interaction allows trafficking of IGFBP5 from the plasma membrane to the nucleus. Phosphorylated at Tyr-14 by ABL1 in response to oxidative stress. In terms of processing, ubiquitinated. Undergo monoubiquitination and multi- and/or polyubiquitination. Monoubiquitination of N-terminal lysines promotes integration in a ternary complex with UBXN6 and VCP which promotes oligomeric CAV1 targeting to lysosomes for degradation. Ubiquitinated by ZNRF1; leading to degradation and modulation of the TLR4-mediated immune response.

It localises to the golgi apparatus membrane. The protein resides in the cell membrane. It is found in the membrane. Its subcellular location is the caveola. The protein localises to the membrane raft. Its function is as follows. May act as a scaffolding protein within caveolar membranes. Forms a stable heterooligomeric complex with CAV2 that targets to lipid rafts and drives caveolae formation. Mediates the recruitment of CAVIN proteins (CAVIN1/2/3/4) to the caveolae. Interacts directly with G-protein alpha subunits and can functionally regulate their activity. Involved in the costimulatory signal essential for T-cell receptor (TCR)-mediated T-cell activation. Its binding to DPP4 induces T-cell proliferation and NF-kappa-B activation in a T-cell receptor/CD3-dependent manner. Recruits CTNNB1 to caveolar membranes and may regulate CTNNB1-mediated signaling through the Wnt pathway. Negatively regulates TGFB1-mediated activation of SMAD2/3 by mediating the internalization of TGFBR1 from membrane rafts leading to its subsequent degradation. Binds 20(S)-hydroxycholesterol (20(S)-OHC). The polypeptide is Caveolin-1 (CAV1) (Equus caballus (Horse)).